A 213-amino-acid chain; its full sequence is MKAYQRQFIEFALEKGVLKFGEFTLKSGRVSPYFFNAGLFNTGRDLARLGRFYAEALVDAGIDYDVLFGPAYKGIPIATTTAVALADHHDIDMPYCFNRKEVKTHGEGGSLVGSDLEGRIMLVDDVITAGTAIRESMEIIKANGADLAGVLVAIDRQEKGKGELSAIQEVERDFGCAVISIVSLGDVVTYLSEQDGMDAHLAAVKSYRAEYGV.

Lys26 contacts 5-phospho-alpha-D-ribose 1-diphosphate. 34–35 is an orotate binding site; the sequence is FF. Residues 72-73, Arg99, Lys100, Lys103, His105, and 124-132 contribute to the 5-phospho-alpha-D-ribose 1-diphosphate site; these read YK and DDVITAGTA. 2 residues coordinate orotate: Thr128 and Arg156.

It belongs to the purine/pyrimidine phosphoribosyltransferase family. PyrE subfamily. In terms of assembly, homodimer. Mg(2+) is required as a cofactor.

The catalysed reaction is orotidine 5'-phosphate + diphosphate = orotate + 5-phospho-alpha-D-ribose 1-diphosphate. Its pathway is pyrimidine metabolism; UMP biosynthesis via de novo pathway; UMP from orotate: step 1/2. Catalyzes the transfer of a ribosyl phosphate group from 5-phosphoribose 1-diphosphate to orotate, leading to the formation of orotidine monophosphate (OMP). This is Orotate phosphoribosyltransferase from Photobacterium profundum (strain SS9).